The sequence spans 364 residues: Fructose-1,6-bisphosphatase class 1 3 (364 aa).

The Mg(2+) site is built by Glu-101, Asp-123, Leu-125, and Asp-126. Substrate is bound by residues 126–129 (DGSS) and Asn-218. Residue Glu-290 coordinates Mg(2+).

The protein belongs to the FBPase class 1 family. As to quaternary structure, homotetramer. The cofactor is Mg(2+).

Its subcellular location is the cytoplasm. It catalyses the reaction beta-D-fructose 1,6-bisphosphate + H2O = beta-D-fructose 6-phosphate + phosphate. It participates in carbohydrate biosynthesis; gluconeogenesis. The polypeptide is Fructose-1,6-bisphosphatase class 1 3 (Cupriavidus necator (strain ATCC 17699 / DSM 428 / KCTC 22496 / NCIMB 10442 / H16 / Stanier 337) (Ralstonia eutropha)).